Consider the following 123-residue polypeptide: DNA-directed RNA polymerase I subunit RPA12 (123 aa).

The Zn(2+) site is built by Cys17, Cys20, Cys35, Cys38, Cys84, and Cys87. The segment at 17-38 adopts a C4-type zinc-finger fold; the sequence is CPDCGSVLPLPGVQDTVICPRC. The segment at 80-120 adopts a TFIIS-type zinc-finger fold; that stretch reads VDRRCSRCGHEGMAYYTRQMRSADEGQTVFYTCINCKFQEK. A Hairpin motif is present at residues 103-104; that stretch reads DE. Residues Cys112 and Cys115 each contribute to the Zn(2+) site.

The protein belongs to the archaeal RpoM/eukaryotic RPA12/RPB9/RPC11 RNA polymerase family. In terms of assembly, component of the RNA polymerase I (Pol I) complex consisting of 13 subunits: a ten-subunit catalytic core composed of POLR1A/RPA1, POLR1B/RPA2, POLR1C/RPAC1, POLR1D/RPAC2, POLR1H/RPA12, POLR2E/RPABC1, POLR2F/RPABC2, POLR2H/RPABC3, POLR2K/RPABC4 and POLR2L/RPABC5; a mobile stalk subunit POLR1F/RPA43 protruding from the core and additional subunits homologous to general transcription factors POLR1E/RPA49 and POLR1G/RPA34. Part of Pol I pre-initiation complex (PIC), in which Pol I core assembles with RRN3 and promoter-bound UTBF and SL1/TIF-IB complex.

It localises to the nucleus. The protein localises to the nucleolus. Functionally, core component of RNA polymerase I (Pol I), a DNA-dependent RNA polymerase which synthesizes ribosomal RNA precursors using the four ribonucleoside triphosphates as substrates. Can mediate Pol I proofreading of the nascent RNA transcript. Anchors into the Pol I active site to monitor transcription fidelity and cleave mis-incorporated 5'-ribonucleotides. The chain is DNA-directed RNA polymerase I subunit RPA12 from Rattus norvegicus (Rat).